Here is a 511-residue protein sequence, read N- to C-terminus: MRIIPRTMSTQHPDNAKVPEWAKSEVIEGEDEVKEAFLAYSMYGVHEVMWDAEGKDVDTHVVRKLLSNYPDYFREHILGKDVFLTYRLPNPKVEGADRKVFAETMESIPITYDLAEKFYGNGITVPVFEVILPMTTSNLEIISVARYYEKAVANEDELELYNGVKVKDLVGEIYPKVIEVIPLVEDRDSLQNIDNIVEGYYKVIKPKYMRVFLARSDPAMNYGMITAVLSVKIALSELYKLSESLNFEIYPIIGVGSLPFRGHLSPENYEKVLEEYKGVYTYTIQSAFKYDYDYDKVKSAISSINNSRIGPAKILEKYEEDVLRKITILYTERYQPIIESLANAINDVSVLLPRRRARKLHIGLFGYSRSAGKVSLPRAISFVGSLYSIGIPPELIGISSLSNLDEKEWDIFKQNYVNFKHDLQTAARFFNWESFELIKDIWKISEDTIAKIKEDIDYAESVIGIKLGDIDYDSRKHILMSSLFLLSFKEKILQESKKYLYEMALIRRSLG.

It belongs to the PEPCase type 2 family. Homotetramer. The cofactor is Mg(2+).

It catalyses the reaction oxaloacetate + phosphate = phosphoenolpyruvate + hydrogencarbonate. In terms of biological role, catalyzes the irreversible beta-carboxylation of phosphoenolpyruvate (PEP) to form oxaloacetate (OAA), a four-carbon dicarboxylic acid source for the tricarboxylic acid cycle. The protein is Phosphoenolpyruvate carboxylase of Saccharolobus islandicus (strain M.16.27) (Sulfolobus islandicus).